Here is a 161-residue protein sequence, read N- to C-terminus: Transcriptional repressor NrdR (161 aa).

The segment at 3-34 (CPYCGARDARVIDSRELNGGESIRRRRECIAC) is a zinc-finger region. An ATP-cone domain is found at 49-139 (LMVVKRDGRR…VYRRFADLED (91 aa)).

This sequence belongs to the NrdR family. The cofactor is Zn(2+).

Negatively regulates transcription of bacterial ribonucleotide reductase nrd genes and operons by binding to NrdR-boxes. The protein is Transcriptional repressor NrdR of Thermomicrobium roseum (strain ATCC 27502 / DSM 5159 / P-2).